Here is a 750-residue protein sequence, read N- to C-terminus: Meiosis protein mei2 (750 aa).

The disordered stretch occupies residues Met-1–Thr-20. The span at Ser-7–Thr-20 shows a compositional bias: polar residues. 2 consecutive RRM domains span residues Arg-195 to Arg-270 and Leu-293 to Val-361.

As to quaternary structure, binds rad24 when phosphorylated. Post-translationally, inactivated by phosphorylation by ran1/pat1.

In terms of biological role, crucial for commitment to meiosis but it is not sufficient itself for the commitment. May be a splicing regulator. This Schizosaccharomyces pombe (strain 972 / ATCC 24843) (Fission yeast) protein is Meiosis protein mei2 (mei2).